The primary structure comprises 187 residues: 1,6-anhydro-N-acetylmuramyl-L-alanine amidase AmpD (187 aa).

An N-acetylmuramoyl-L-alanine amidase domain is found at 29–167; that stretch reads SLLVVHNISL…APDRKTDPGP (139 aa). Zn(2+) is bound at residue histidine 34. Glutamate 116 serves as the catalytic Proton acceptor. Zn(2+)-binding residues include histidine 154 and aspartate 164.

This sequence belongs to the N-acetylmuramoyl-L-alanine amidase 2 family. Zn(2+) is required as a cofactor.

It is found in the cytoplasm. The catalysed reaction is Hydrolyzes the link between N-acetylmuramoyl residues and L-amino acid residues in certain cell-wall glycopeptides.. Involved in cell wall peptidoglycan recycling. Specifically cleaves the amide bond between the lactyl group of N-acetylmuramic acid and the alpha-amino group of the L-alanine in degradation products containing an anhydro N-acetylmuramyl moiety. This is 1,6-anhydro-N-acetylmuramyl-L-alanine amidase AmpD (ampD) from Salmonella typhimurium (strain SL1344).